A 343-amino-acid polypeptide reads, in one-letter code: Anthranilate phosphoribosyltransferase (343 aa).

5-phospho-alpha-D-ribose 1-diphosphate is bound by residues Gly-84, 87–88 (GD), Thr-92, 94–97 (NIST), 112–120 (KHGNRSASS), and Ser-124. Anthranilate is bound at residue Gly-84. Ser-96 lines the Mg(2+) pocket. Asn-115 lines the anthranilate pocket. Anthranilate is bound at residue Arg-170. Mg(2+) is bound by residues Asp-229 and Glu-230.

The protein belongs to the anthranilate phosphoribosyltransferase family. In terms of assembly, homodimer. Mg(2+) serves as cofactor.

It catalyses the reaction N-(5-phospho-beta-D-ribosyl)anthranilate + diphosphate = 5-phospho-alpha-D-ribose 1-diphosphate + anthranilate. Its pathway is amino-acid biosynthesis; L-tryptophan biosynthesis; L-tryptophan from chorismate: step 2/5. Its function is as follows. Catalyzes the transfer of the phosphoribosyl group of 5-phosphorylribose-1-pyrophosphate (PRPP) to anthranilate to yield N-(5'-phosphoribosyl)-anthranilate (PRA). The protein is Anthranilate phosphoribosyltransferase of Bordetella bronchiseptica (strain ATCC BAA-588 / NCTC 13252 / RB50) (Alcaligenes bronchisepticus).